Reading from the N-terminus, the 270-residue chain is MKRSQRMNNSPERHSQYRNEPHYNTYYQPVGKPPKKKKNKRIFLRLFIIFVFIYALFIGLMYYLSSRANVDDLKTIENKSSYVSADNMPDYVKGAFISMEDERFYKHHGFDVKGTTRALFSTIGDRDVQGGSTITQQTVKNYYYDNERSFTRKLKELFVAHKVEQQYSKNEILSFYLNNIYYGSDQYTIESAANYYFGTTVNKNSDSMSQITVLQSAILASKVNAPSVYDISNMSDNFKNRIKTNLEKMKQQEYISDSQYQEALSQLNNY.

Over residues 1-10 (MKRSQRMNNS) the composition is skewed to polar residues. Residues 1-36 (MKRSQRMNNSPERHSQYRNEPHYNTYYQPVGKPPKK) are disordered. A compositionally biased stretch (basic and acidic residues) spans 11-21 (PERHSQYRNEP). Residues 42-62 (IFLRLFIIFVFIYALFIGLMY) form a helical membrane-spanning segment.

This sequence belongs to the glycosyltransferase 51 family.

Its subcellular location is the cell membrane. It carries out the reaction [GlcNAc-(1-&gt;4)-Mur2Ac(oyl-L-Ala-gamma-D-Glu-L-Lys-D-Ala-D-Ala)](n)-di-trans,octa-cis-undecaprenyl diphosphate + beta-D-GlcNAc-(1-&gt;4)-Mur2Ac(oyl-L-Ala-gamma-D-Glu-L-Lys-D-Ala-D-Ala)-di-trans,octa-cis-undecaprenyl diphosphate = [GlcNAc-(1-&gt;4)-Mur2Ac(oyl-L-Ala-gamma-D-Glu-L-Lys-D-Ala-D-Ala)](n+1)-di-trans,octa-cis-undecaprenyl diphosphate + di-trans,octa-cis-undecaprenyl diphosphate + H(+). The protein operates within cell wall biogenesis; peptidoglycan biosynthesis. Peptidoglycan polymerase that catalyzes glycan chain elongation using lipid-linked disaccharide-pentapeptide as the substrate. The protein is Monofunctional glycosyltransferase of Staphylococcus haemolyticus (strain JCSC1435).